The following is a 707-amino-acid chain: Polyribonucleotide nucleotidyltransferase (707 aa).

Mg(2+)-binding residues include D488 and D494. A KH domain is found at 554–613 (PRLFTMKINQDKIREVIGKGGETIRSITAETGTEINIAEDGTITIAATTQEAGDAAKKRI). One can recognise an S1 motif domain in the interval 623-693 (GKVYEGTVVK…DRGRVRLSIK (71 aa)).

This sequence belongs to the polyribonucleotide nucleotidyltransferase family. It depends on Mg(2+) as a cofactor.

It localises to the cytoplasm. It catalyses the reaction RNA(n+1) + phosphate = RNA(n) + a ribonucleoside 5'-diphosphate. Involved in mRNA degradation. Catalyzes the phosphorolysis of single-stranded polyribonucleotides processively in the 3'- to 5'-direction. In Neisseria meningitidis serogroup B (strain ATCC BAA-335 / MC58), this protein is Polyribonucleotide nucleotidyltransferase.